The chain runs to 107 residues: uncharacterized protein (107 aa).

A helical membrane pass occupies residues alanine 9 to phenylalanine 31.

It is found in the membrane. This is an uncharacterized protein from Archaeoglobus fulgidus (strain ATCC 49558 / DSM 4304 / JCM 9628 / NBRC 100126 / VC-16).